The following is a 280-amino-acid chain: Phosphatidylglycerol--prolipoprotein diacylglyceryl transferase (280 aa).

Transmembrane regions (helical) follow at residues 21-41 (WYGI…ISEG), 54-74 (LLLW…VIFE), and 88-108 (IWNG…VLLI). Arg136 contributes to the a 1,2-diacyl-sn-glycero-3-phospho-(1'-sn-glycerol) binding site. Helical transmembrane passes span 176–196 (QPTF…ILSL), 206–226 (GEVF…VEGM), and 236–256 (IIRV…ILWI).

This sequence belongs to the Lgt family.

The protein localises to the cell membrane. It carries out the reaction L-cysteinyl-[prolipoprotein] + a 1,2-diacyl-sn-glycero-3-phospho-(1'-sn-glycerol) = an S-1,2-diacyl-sn-glyceryl-L-cysteinyl-[prolipoprotein] + sn-glycerol 1-phosphate + H(+). It participates in protein modification; lipoprotein biosynthesis (diacylglyceryl transfer). Its function is as follows. Catalyzes the transfer of the diacylglyceryl group from phosphatidylglycerol to the sulfhydryl group of the N-terminal cysteine of a prolipoprotein, the first step in the formation of mature lipoproteins. This Lactobacillus acidophilus (strain ATCC 700396 / NCK56 / N2 / NCFM) protein is Phosphatidylglycerol--prolipoprotein diacylglyceryl transferase.